A 360-amino-acid polypeptide reads, in one-letter code: MSQERPTFYRQELNKTIWEVPERYQNLSPVGSGAYGSVCAAFDTKTGLRVAVKKLSRPFQSIIHAKRTYRELRLLKHMKHENVIGLLDVFTPARSLEEFNDVYLVTHLMGADLNNIVKCQKLTDDHVQFLIYQILRGLKYIHSADIIHRDLKPSNLAVNEDCELKILDFGLARHTDDEMTGYVATRWYRAPEIMLNWMHYNQTVDIWSVGCIMAELLTGRTLFPGTDHINQLQQIMRLTGTPPAYLINRMPSHEARNYIQSLTQMPKMNFANVFIGANPLAVDLLEKMLVLDSDKRITAAQALAHAYFAQYHDPDDEPVADPYDQSFESRDLLIDEWKSLTYDEVISFVPPPLDQEEMES.

S2 carries the post-translational modification N-acetylserine. Residue S2 is modified to Phosphoserine. Phosphothreonine is present on T16. The 285-residue stretch at 24 to 308 (YQNLSPVGSG…AAQALAHAYF (285 aa)) folds into the Protein kinase domain. ATP is bound by residues 30-38 (VGSGAYGSV) and K53. K53 bears the N6-acetyllysine mark. Catalysis depends on D150, which acts as the Proton acceptor. At K152 the chain carries N6-acetyllysine. T180 carries the phosphothreonine; by MAP2K3, MAP2K4, MAP2K6 and autocatalysis modification. Y182 carries the phosphotyrosine; by MAP2K3, MAP2K4, MAP2K6 and autocatalysis modification. T263 is subject to Phosphothreonine. Y323 is modified (phosphotyrosine; by ZAP70).

This sequence belongs to the protein kinase superfamily. CMGC Ser/Thr protein kinase family. MAP kinase subfamily. Component of a signaling complex containing at least AKAP13, PKN1, MAPK14, ZAK and MAP2K3. Within this complex, AKAP13 interacts directly with PKN1, which in turn recruits MAPK14, MAP2K3 and ZAK. Binds to a kinase interaction motif within the protein tyrosine phosphatase, PTPRR. This interaction retains MAPK14 in the cytoplasm and prevents nuclear accumulation. Interacts with SPAG9 and GADD45A. Interacts with CDC25B, CDC25C, DUSP1, DUSP10, DUSP16, NP60, SUPT20H and TAB1. Interacts with casein kinase II subunits CSNK2A1 and CSNK2B. Interacts with PPM1D. Interacts with CDK5RAP3; recruits PPM1D to MAPK14 and may regulate its dephosphorylation. Interacts with DUSP2; this interaction does not lead to catalytic activation of DUSP2 and dephosphrylation of MAPK14. Requires Mg(2+) as cofactor. In terms of processing, dually phosphorylated on Thr-180 and Tyr-182 by the MAP2Ks MAP2K3/MKK3, MAP2K4/MKK4 and MAP2K6/MKK6 in response to inflammatory cytokines, environmental stress or growth factors, which activates the enzyme. Dual phosphorylation can also be mediated by TAB1-mediated autophosphorylation. TCR engagement in T-cells also leads to Tyr-323 phosphorylation by ZAP70. Dephosphorylated and inactivated by DUPS1, DUSP10 and DUSP16. PPM1D also mediates dephosphorylation and inactivation of MAPK14. Post-translationally, acetylated at Lys-53 and Lys-152 by KAT2B and EP300. Acetylation at Lys-53 increases the affinity for ATP and enhances kinase activity. Lys-53 and Lys-152 are deacetylated by HDAC3. Ubiquitinated. Ubiquitination leads to degradation by the proteasome pathway.

It is found in the cytoplasm. Its subcellular location is the nucleus. It catalyses the reaction L-seryl-[protein] + ATP = O-phospho-L-seryl-[protein] + ADP + H(+). The catalysed reaction is L-threonyl-[protein] + ATP = O-phospho-L-threonyl-[protein] + ADP + H(+). Activated by cell stresses such as DNA damage, heat shock, osmotic shock, anisomycin and sodium arsenite, as well as pro-inflammatory stimuli such as bacterial lipopolysaccharide (LPS) and interleukin-1. Activation occurs through dual phosphorylation of Thr-180 and Tyr-182 by either of two dual specificity kinases, MAP2K3/MKK3 or MAP2K6/MKK6, and potentially also MAP2K4/MKK4, as well as by TAB1-mediated autophosphorylation. MAPK14 phosphorylated on both Thr-180 and Tyr-182 is 10-20-fold more active than MAPK14 phosphorylated only on Thr-180, whereas MAPK14 phosphorylated on Tyr-182 alone is inactive. whereas Thr-180 is necessary for catalysis, Tyr-182 may be required for auto-activation and substrate recognition. Phosphorylated at Tyr-323 by ZAP70 in an alternative activation pathway in response to TCR signaling in T-cells. This alternative pathway is inhibited by GADD45A. Inhibited by dual specificity phosphatases, such as DUSP1, DUSP10, and DUSP16. Specifically inhibited by the binding of pyridinyl-imidazole compounds, which are cytokine-suppressive anti-inflammatory drugs (CSAID). SB203580 is an inhibitor of MAPK14. Serine/threonine kinase which acts as an essential component of the MAP kinase signal transduction pathway. MAPK14 is one of the four p38 MAPKs which play an important role in the cascades of cellular responses evoked by extracellular stimuli such as pro-inflammatory cytokines or physical stress leading to direct activation of transcription factors. Accordingly, p38 MAPKs phosphorylate a broad range of proteins and it has been estimated that they may have approximately 200 to 300 substrates each. Some of the targets are downstream kinases which are activated through phosphorylation and further phosphorylate additional targets. RPS6KA5/MSK1 and RPS6KA4/MSK2 can directly phosphorylate and activate transcription factors such as CREB1, ATF1, the NF-kappa-B isoform RELA/NFKB3, STAT1 and STAT3, but can also phosphorylate histone H3 and the nucleosomal protein HMGN1. RPS6KA5/MSK1 and RPS6KA4/MSK2 play important roles in the rapid induction of immediate-early genes in response to stress or mitogenic stimuli, either by inducing chromatin remodeling or by recruiting the transcription machinery. On the other hand, two other kinase targets, MAPKAPK2/MK2 and MAPKAPK3/MK3, participate in the control of gene expression mostly at the post-transcriptional level, by phosphorylating ZFP36 (tristetraprolin) and ELAVL1, and by regulating EEF2K, which is important for the elongation of mRNA during translation. MKNK1/MNK1 and MKNK2/MNK2, two other kinases activated by p38 MAPKs, regulate protein synthesis by phosphorylating the initiation factor EIF4E2. MAPK14 also interacts with casein kinase II, leading to its activation through autophosphorylation and further phosphorylation of TP53/p53. In the cytoplasm, the p38 MAPK pathway is an important regulator of protein turnover. For example, CFLAR is an inhibitor of TNF-induced apoptosis whose proteasome-mediated degradation is regulated by p38 MAPK phosphorylation. In a similar way, MAPK14 phosphorylates the ubiquitin ligase SIAH2, regulating its activity towards EGLN3. MAPK14 may also inhibit the lysosomal degradation pathway of autophagy by interfering with the intracellular trafficking of the transmembrane protein ATG9. Another function of MAPK14 is to regulate the endocytosis of membrane receptors by different mechanisms that impinge on the small GTPase RAB5A. In addition, clathrin-mediated EGFR internalization induced by inflammatory cytokines and UV irradiation depends on MAPK14-mediated phosphorylation of EGFR itself as well as of RAB5A effectors. Ectodomain shedding of transmembrane proteins is regulated by p38 MAPKs as well. In response to inflammatory stimuli, p38 MAPKs phosphorylate the membrane-associated metalloprotease ADAM17. Such phosphorylation is required for ADAM17-mediated ectodomain shedding of TGF-alpha family ligands, which results in the activation of EGFR signaling and cell proliferation. Another p38 MAPK substrate is FGFR1. FGFR1 can be translocated from the extracellular space into the cytosol and nucleus of target cells, and regulates processes such as rRNA synthesis and cell growth. FGFR1 translocation requires p38 MAPK activation. In the nucleus, many transcription factors are phosphorylated and activated by p38 MAPKs in response to different stimuli. Classical examples include ATF1, ATF2, ATF6, ELK1, PTPRH, DDIT3, TP53/p53 and MEF2C and MEF2A. The p38 MAPKs are emerging as important modulators of gene expression by regulating chromatin modifiers and remodelers. The promoters of several genes involved in the inflammatory response, such as IL6, IL8 and IL12B, display a p38 MAPK-dependent enrichment of histone H3 phosphorylation on 'Ser-10' (H3S10ph) in LPS-stimulated myeloid cells. This phosphorylation enhances the accessibility of the cryptic NF-kappa-B-binding sites marking promoters for increased NF-kappa-B recruitment. Phosphorylates CDC25B and CDC25C which is required for binding to 14-3-3 proteins and leads to initiation of a G2 delay after ultraviolet radiation. Phosphorylates TIAR following DNA damage, releasing TIAR from GADD45A mRNA and preventing mRNA degradation. The p38 MAPKs may also have kinase-independent roles, which are thought to be due to the binding to targets in the absence of phosphorylation. Protein O-Glc-N-acylation catalyzed by the OGT is regulated by MAPK14, and, although OGT does not seem to be phosphorylated by MAPK14, their interaction increases upon MAPK14 activation induced by glucose deprivation. This interaction may regulate OGT activity by recruiting it to specific targets such as neurofilament H, stimulating its O-Glc-N-acylation. Required in mid-fetal development for the growth of embryo-derived blood vessels in the labyrinth layer of the placenta. Also plays an essential role in developmental and stress-induced erythropoiesis, through regulation of EPO gene expression. Phosphorylates S100A9 at 'Thr-113'. This chain is Mitogen-activated protein kinase 14, found in Pan troglodytes (Chimpanzee).